Consider the following 197-residue polypeptide: Potassium-transporting ATPase KdpC subunit (197 aa).

The helical transmembrane segment at 9–29 (LVVTLLLAALLCGAYPVLVTG) threads the bilayer.

The protein belongs to the KdpC family. In terms of assembly, the system is composed of three essential subunits: KdpA, KdpB and KdpC.

It is found in the cell inner membrane. In terms of biological role, part of the high-affinity ATP-driven potassium transport (or Kdp) system, which catalyzes the hydrolysis of ATP coupled with the electrogenic transport of potassium into the cytoplasm. This subunit acts as a catalytic chaperone that increases the ATP-binding affinity of the ATP-hydrolyzing subunit KdpB by the formation of a transient KdpB/KdpC/ATP ternary complex. This chain is Potassium-transporting ATPase KdpC subunit, found in Nitratidesulfovibrio vulgaris (strain DSM 19637 / Miyazaki F) (Desulfovibrio vulgaris).